An 887-amino-acid chain; its full sequence is Beta-galactosidase 14 (887 aa).

Residues 1–31 (MSKSSRIRMKSRTRYLIAILLVISLCSKASS) form the signal peptide. The Proton donor role is filled by Glu197. Glu268 functions as the Nucleophile in the catalytic mechanism. Asn269, Asn300, Asn395, and Asn785 each carry an N-linked (GlcNAc...) asparagine glycan. The SUEL-type lectin domain occupies 752–838 (KDMRLKAVMR…KTLAVQVKCE (87 aa)). Positions 838–852 (EKKEGKQDEKKKKED) are enriched in basic and acidic residues. Residues 838–887 (EKKEGKQDEKKKKEDKDEEEEDDEDDDEEEEEEDKENKDTKDMENKNQDM) are disordered. Residues 853–871 (KDEEEEDDEDDDEEEEEED) show a composition bias toward acidic residues. The segment covering 872–887 (KENKDTKDMENKNQDM) has biased composition (basic and acidic residues).

The protein belongs to the glycosyl hydrolase 35 family.

The protein localises to the secreted. It localises to the extracellular space. The protein resides in the apoplast. The catalysed reaction is Hydrolysis of terminal non-reducing beta-D-galactose residues in beta-D-galactosides.. The chain is Beta-galactosidase 14 (BGAL14) from Arabidopsis thaliana (Mouse-ear cress).